We begin with the raw amino-acid sequence, 390 residues long: Manganese peroxidase 2 (390 aa).

The first 23 residues, 1–23 (MAFNFAAILAFVSLAAVTSAAPS), serve as a signal peptide directing secretion. Intrachain disulfides connect Cys-27-Cys-39, Cys-38-Cys-313, Cys-57-Cys-141, Cys-277-Cys-343, and Cys-365-Cys-372. Mn(2+)-binding residues include Glu-59 and Glu-63. The Proton acceptor role is filled by His-70. 4 residues coordinate Ca(2+): Asp-71, Gly-86, Asp-88, and Ser-90. N-linked (GlcNAc...) asparagine glycosylation is present at Asn-155. His-197 serves as a coordination point for heme b. Ser-198 provides a ligand contact to Ca(2+). Residue Asp-203 coordinates Mn(2+). Residues Asp-215, Thr-217, and Asp-222 each contribute to the Ca(2+) site. The N-linked (GlcNAc...) asparagine glycan is linked to Asn-241.

Belongs to the peroxidase family. Ligninase subfamily. Heme b serves as cofactor. The cofactor is Ca(2+).

It is found in the secreted. It carries out the reaction 2 Mn(2+) + H2O2 + 2 H(+) = 2 Mn(3+) + 2 H2O. In terms of biological role, catalyzes the oxidation of Mn(2+) to Mn(3+). The latter, acting as a diffusible redox mediator, is capable of oxidizing a variety of lignin compounds. The polypeptide is Manganese peroxidase 2 (mnp2) (Phlebia radiata (White-rot fungus)).